A 356-amino-acid chain; its full sequence is Histidinol-phosphate aminotransferase (356 aa).

At Lys-213 the chain carries N6-(pyridoxal phosphate)lysine.

The protein belongs to the class-II pyridoxal-phosphate-dependent aminotransferase family. Histidinol-phosphate aminotransferase subfamily. As to quaternary structure, homodimer. Pyridoxal 5'-phosphate serves as cofactor.

It catalyses the reaction L-histidinol phosphate + 2-oxoglutarate = 3-(imidazol-4-yl)-2-oxopropyl phosphate + L-glutamate. It participates in amino-acid biosynthesis; L-histidine biosynthesis; L-histidine from 5-phospho-alpha-D-ribose 1-diphosphate: step 7/9. In Clostridium novyi (strain NT), this protein is Histidinol-phosphate aminotransferase.